A 277-amino-acid chain; its full sequence is MPELPEVEVCRRGLEPELAGQVIQGVVIRAPKLRHEIPPALATLLPGCRVVAVRRRGKYLLLDCERRGVQGTLIIHLGMSGNLRFVPFDLPPAKHDHFELVLAGQILRFADPRRFGVVLWQPGPPASAECHPLLATQGIEPLSEMFTAEWLYEAIARRSGPIKPTLMDSHLVVGIGNIYASESLFRAGISPLRAANRVSRARYEILVPAIRETLSDAIAAGGSSIRDYVHSDGGAGCFQIQAGVYDRANQPCLRCGGVVRQIRQAGRSTYYCTGCQH.

P2 functions as the Schiff-base intermediate with DNA in the catalytic mechanism. E3 functions as the Proton donor in the catalytic mechanism. Catalysis depends on K58, which acts as the Proton donor; for beta-elimination activity. The DNA site is built by H95, R113, and R158. The FPG-type zinc-finger motif lies at 243-277 (GVYDRANQPCLRCGGVVRQIRQAGRSTYYCTGCQH). R267 functions as the Proton donor; for delta-elimination activity in the catalytic mechanism.

This sequence belongs to the FPG family. In terms of assembly, monomer. The cofactor is Zn(2+).

It catalyses the reaction Hydrolysis of DNA containing ring-opened 7-methylguanine residues, releasing 2,6-diamino-4-hydroxy-5-(N-methyl)formamidopyrimidine.. The catalysed reaction is 2'-deoxyribonucleotide-(2'-deoxyribose 5'-phosphate)-2'-deoxyribonucleotide-DNA = a 3'-end 2'-deoxyribonucleotide-(2,3-dehydro-2,3-deoxyribose 5'-phosphate)-DNA + a 5'-end 5'-phospho-2'-deoxyribonucleoside-DNA + H(+). In terms of biological role, involved in base excision repair of DNA damaged by oxidation or by mutagenic agents. Acts as a DNA glycosylase that recognizes and removes damaged bases. Has a preference for oxidized purines, such as 7,8-dihydro-8-oxoguanine (8-oxoG). Has AP (apurinic/apyrimidinic) lyase activity and introduces nicks in the DNA strand. Cleaves the DNA backbone by beta-delta elimination to generate a single-strand break at the site of the removed base with both 3'- and 5'-phosphates. The chain is Formamidopyrimidine-DNA glycosylase from Dechloromonas aromatica (strain RCB).